The chain runs to 558 residues: CTP synthase (558 aa).

Positions 1–270 are amidoligase domain; the sequence is MTKYVFVTGG…DDLICRELDL (270 aa). CTP is bound at residue Ser13. Ser13 contacts UTP. ATP is bound by residues 14-19 and Asp71; that span reads SLGKGI. Positions 71 and 144 each coordinate Mg(2+). CTP-binding positions include 151–153, 191–196, and Lys227; these read DIE and KTKPTQ. UTP contacts are provided by residues 191-196 and Lys227; that span reads KTKPTQ. A Glutamine amidotransferase type-1 domain is found at 295–547; sequence TIGMVGKYVE…ISAALEHQKK (253 aa). Gly356 is a binding site for L-glutamine. The active-site Nucleophile; for glutamine hydrolysis is Cys383. L-glutamine is bound by residues 384–387, Glu407, and Arg473; that span reads LGMQ. Residues His520 and Glu522 contribute to the active site.

Belongs to the CTP synthase family. In terms of assembly, homotetramer.

It carries out the reaction UTP + L-glutamine + ATP + H2O = CTP + L-glutamate + ADP + phosphate + 2 H(+). The enzyme catalyses L-glutamine + H2O = L-glutamate + NH4(+). The catalysed reaction is UTP + NH4(+) + ATP = CTP + ADP + phosphate + 2 H(+). It functions in the pathway pyrimidine metabolism; CTP biosynthesis via de novo pathway; CTP from UDP: step 2/2. Its activity is regulated as follows. Allosterically activated by GTP, when glutamine is the substrate; GTP has no effect on the reaction when ammonia is the substrate. The allosteric effector GTP functions by stabilizing the protein conformation that binds the tetrahedral intermediate(s) formed during glutamine hydrolysis. Inhibited by the product CTP, via allosteric rather than competitive inhibition. In terms of biological role, catalyzes the ATP-dependent amination of UTP to CTP with either L-glutamine or ammonia as the source of nitrogen. Regulates intracellular CTP levels through interactions with the four ribonucleotide triphosphates. This Polynucleobacter necessarius subsp. necessarius (strain STIR1) protein is CTP synthase.